Reading from the N-terminus, the 223-residue chain is Membrane protein (223 aa).

Topologically, residues 1 to 18 (MAENCTLDSEQAVLLFKE) are virion surface. Residues 19 to 39 (YNLFITAFLLFLTILLQYGYA) traverse the membrane as a helical segment. The Intravirion segment spans residues 40 to 49 (TRSRTIYILK). A helical membrane pass occupies residues 50 to 70 (MIVLWCFWPLNIAVGVISCIY). At 71-75 (PPNTG) the chain is on the virion surface side. Residues 76–96 (GLVAAIILTVFACLSFVGYWI) form a helical membrane-spanning segment. Topologically, residues 97 to 223 (QSCRLFKRCR…VATGGSSLYT (127 aa)) are intravirion.

It belongs to the gammacoronaviruses M protein family. In terms of assembly, homomultimer. Interacts with envelope E protein in the budding compartment of the host cell, which is located between endoplasmic reticulum and the Golgi complex. Forms a complex with HE and S proteins. Interacts with nucleocapsid N protein. This interaction probably participates in RNA packaging into the virus.

It is found in the virion membrane. The protein localises to the host Golgi apparatus membrane. Functionally, component of the viral envelope that plays a central role in virus morphogenesis and assembly via its interactions with other viral proteins. The protein is Membrane protein of Gallus gallus (Chicken).